The sequence spans 160 residues: SsrA-binding protein (160 aa).

This sequence belongs to the SmpB family.

It is found in the cytoplasm. Functionally, required for rescue of stalled ribosomes mediated by trans-translation. Binds to transfer-messenger RNA (tmRNA), required for stable association of tmRNA with ribosomes. tmRNA and SmpB together mimic tRNA shape, replacing the anticodon stem-loop with SmpB. tmRNA is encoded by the ssrA gene; the 2 termini fold to resemble tRNA(Ala) and it encodes a 'tag peptide', a short internal open reading frame. During trans-translation Ala-aminoacylated tmRNA acts like a tRNA, entering the A-site of stalled ribosomes, displacing the stalled mRNA. The ribosome then switches to translate the ORF on the tmRNA; the nascent peptide is terminated with the 'tag peptide' encoded by the tmRNA and targeted for degradation. The ribosome is freed to recommence translation, which seems to be the essential function of trans-translation. The polypeptide is SsrA-binding protein (Proteus mirabilis (strain HI4320)).